The following is a 356-amino-acid chain: tRNA N6-adenosine threonylcarbamoyltransferase (356 aa).

Residues His-122, His-126, and Tyr-143 each coordinate a divalent metal cation. Substrate-binding positions include 143–147, Asp-175, Gly-190, Glu-194, and Asn-287; that span reads YVSGG. Asp-315 contributes to the a divalent metal cation binding site.

The protein belongs to the KAE1 / TsaD family. In terms of assembly, component of the EKC/KEOPS complex composed of at least BUD32, CGI121, GON7, KAE1 and PCC1; the whole complex dimerizes. Requires a divalent metal cation as cofactor.

Its subcellular location is the cytoplasm. The protein resides in the nucleus. The catalysed reaction is L-threonylcarbamoyladenylate + adenosine(37) in tRNA = N(6)-L-threonylcarbamoyladenosine(37) in tRNA + AMP + H(+). Its function is as follows. Component of the EKC/KEOPS complex that is required for the formation of a threonylcarbamoyl group on adenosine at position 37 (t(6)A37) in tRNAs that read codons beginning with adenine. The complex is probably involved in the transfer of the threonylcarbamoyl moiety of threonylcarbamoyl-AMP (TC-AMP) to the N6 group of A37. KAE1 likely plays a direct catalytic role in this reaction, but requires other protein(s) of the complex to fulfill this activity. The EKC/KEOPS complex also promotes both telomere uncapping and telomere elongation. The complex is required for efficient recruitment of transcriptional coactivators. The polypeptide is tRNA N6-adenosine threonylcarbamoyltransferase (Chaetomium globosum (strain ATCC 6205 / CBS 148.51 / DSM 1962 / NBRC 6347 / NRRL 1970) (Soil fungus)).